Reading from the N-terminus, the 160-residue chain is SsrA-binding protein (160 aa).

The protein belongs to the SmpB family.

The protein resides in the cytoplasm. Functionally, required for rescue of stalled ribosomes mediated by trans-translation. Binds to transfer-messenger RNA (tmRNA), required for stable association of tmRNA with ribosomes. tmRNA and SmpB together mimic tRNA shape, replacing the anticodon stem-loop with SmpB. tmRNA is encoded by the ssrA gene; the 2 termini fold to resemble tRNA(Ala) and it encodes a 'tag peptide', a short internal open reading frame. During trans-translation Ala-aminoacylated tmRNA acts like a tRNA, entering the A-site of stalled ribosomes, displacing the stalled mRNA. The ribosome then switches to translate the ORF on the tmRNA; the nascent peptide is terminated with the 'tag peptide' encoded by the tmRNA and targeted for degradation. The ribosome is freed to recommence translation, which seems to be the essential function of trans-translation. The sequence is that of SsrA-binding protein from Novosphingobium aromaticivorans (strain ATCC 700278 / DSM 12444 / CCUG 56034 / CIP 105152 / NBRC 16084 / F199).